Consider the following 135-residue polypeptide: Ribonuclease P protein component 2 (135 aa).

This sequence belongs to the eukaryotic/archaeal RNase P protein component 2 family. Consists of a catalytic RNA component and at least 4-5 protein subunits.

The protein resides in the cytoplasm. It catalyses the reaction Endonucleolytic cleavage of RNA, removing 5'-extranucleotides from tRNA precursor.. Part of ribonuclease P, a protein complex that generates mature tRNA molecules by cleaving their 5'-ends. The sequence is that of Ribonuclease P protein component 2 from Methanococcus aeolicus (strain ATCC BAA-1280 / DSM 17508 / OCM 812 / Nankai-3).